We begin with the raw amino-acid sequence, 304 residues long: MEHAEQIYQRLVEICGERNVLRDEPMKNHTLVRIGGKADFLVWPETYEQVIEVLRLKEEYGLPFTLLGNGSNVIIRDGGLRGIVMQLKHLNRIWREGNNVIAQSGADIKAVSRFALEQHLTGLEFACGIPGSVGGAIMMNAGAYGGEVKDVLDHVKVATLSGELKTLKNEELELGYRTSLISRTHDIVLEVVFALRPGDYAQIKAKMDDLTFQRESKQPLEYPSVGSVFKRPPGYFAGKLIQDSGLQGKGFGGAEVSTKHAGFIINKNNATAADYIATIEMVRKTVKEKFGVDLELEVKIIGEE.

The 165-residue stretch at 34 to 198 (IGGKADFLVW…LEVVFALRPG (165 aa)) folds into the FAD-binding PCMH-type domain. R177 is a catalytic residue. S227 (proton donor) is an active-site residue. E297 is a catalytic residue.

It belongs to the MurB family. FAD is required as a cofactor.

It localises to the cytoplasm. It carries out the reaction UDP-N-acetyl-alpha-D-muramate + NADP(+) = UDP-N-acetyl-3-O-(1-carboxyvinyl)-alpha-D-glucosamine + NADPH + H(+). Its pathway is cell wall biogenesis; peptidoglycan biosynthesis. Functionally, cell wall formation. The sequence is that of UDP-N-acetylenolpyruvoylglucosamine reductase from Geobacillus kaustophilus (strain HTA426).